Consider the following 277-residue polypeptide: Small ribosomal subunit protein uS3 (277 aa).

One can recognise a KH type-2 domain in the interval 38-106 (IRRLLATGLE…QVQLNILEVK (69 aa)). The tract at residues 217–277 (AGVEAGRGAP…SAPSAETTES (61 aa)) is disordered. A compositionally biased stretch (basic and acidic residues) spans 225 to 235 (APDRPRRERPA). Low complexity predominate over residues 242–261 (SGSSGTTATSTEAGRAAAET).

Belongs to the universal ribosomal protein uS3 family. In terms of assembly, part of the 30S ribosomal subunit. Forms a tight complex with proteins S10 and S14.

In terms of biological role, binds the lower part of the 30S subunit head. Binds mRNA in the 70S ribosome, positioning it for translation. The polypeptide is Small ribosomal subunit protein uS3 (Mycobacteroides abscessus (strain ATCC 19977 / DSM 44196 / CCUG 20993 / CIP 104536 / JCM 13569 / NCTC 13031 / TMC 1543 / L948) (Mycobacterium abscessus)).